Here is an 83-residue protein sequence, read N- to C-terminus: ATP synthase subunit c, chloroplastic (83 aa).

2 helical membrane passes run 3-23 (PLIA…AAIG) and 57-77 (FAFM…LLFA).

This sequence belongs to the ATPase C chain family. F-type ATPases have 2 components, F(1) - the catalytic core - and F(0) - the membrane proton channel. F(1) has five subunits: alpha(3), beta(3), gamma(1), delta(1), epsilon(1). F(0) has four main subunits: a(1), b(1), b'(1) and c(10-14). The alpha and beta chains form an alternating ring which encloses part of the gamma chain. F(1) is attached to F(0) by a central stalk formed by the gamma and epsilon chains, while a peripheral stalk is formed by the delta, b and b' chains.

The protein resides in the plastid. Its subcellular location is the chloroplast thylakoid membrane. In terms of biological role, f(1)F(0) ATP synthase produces ATP from ADP in the presence of a proton or sodium gradient. F-type ATPases consist of two structural domains, F(1) containing the extramembraneous catalytic core and F(0) containing the membrane proton channel, linked together by a central stalk and a peripheral stalk. During catalysis, ATP synthesis in the catalytic domain of F(1) is coupled via a rotary mechanism of the central stalk subunits to proton translocation. Key component of the F(0) channel; it plays a direct role in translocation across the membrane. A homomeric c-ring of between 10-14 subunits forms the central stalk rotor element with the F(1) delta and epsilon subunits. This chain is ATP synthase subunit c, chloroplastic, found in Oedogonium cardiacum (Filamentous green alga).